A 213-amino-acid polypeptide reads, in one-letter code: uncharacterized protein (213 aa).

This is an uncharacterized protein from Acanthamoeba polyphaga (Amoeba).